Consider the following 268-residue polypeptide: Formamidopyrimidine-DNA glycosylase (268 aa).

P2 functions as the Schiff-base intermediate with DNA in the catalytic mechanism. The active-site Proton donor is the E3. The Proton donor; for beta-elimination activity role is filled by K56. Residues H91, R110, and R149 each coordinate DNA. Residues 234-268 form an FPG-type zinc finger; that stretch reads QVYGRFNQACPNCGQPLKRSRIGGRSSHYCEKCQQ. The Proton donor; for delta-elimination activity role is filled by R258.

Belongs to the FPG family. As to quaternary structure, monomer. Requires Zn(2+) as cofactor.

The enzyme catalyses Hydrolysis of DNA containing ring-opened 7-methylguanine residues, releasing 2,6-diamino-4-hydroxy-5-(N-methyl)formamidopyrimidine.. It carries out the reaction 2'-deoxyribonucleotide-(2'-deoxyribose 5'-phosphate)-2'-deoxyribonucleotide-DNA = a 3'-end 2'-deoxyribonucleotide-(2,3-dehydro-2,3-deoxyribose 5'-phosphate)-DNA + a 5'-end 5'-phospho-2'-deoxyribonucleoside-DNA + H(+). Its function is as follows. Involved in base excision repair of DNA damaged by oxidation or by mutagenic agents. Acts as a DNA glycosylase that recognizes and removes damaged bases. Has a preference for oxidized purines, such as 7,8-dihydro-8-oxoguanine (8-oxoG). Has AP (apurinic/apyrimidinic) lyase activity and introduces nicks in the DNA strand. Cleaves the DNA backbone by beta-delta elimination to generate a single-strand break at the site of the removed base with both 3'- and 5'-phosphates. This chain is Formamidopyrimidine-DNA glycosylase, found in Syntrophomonas wolfei subsp. wolfei (strain DSM 2245B / Goettingen).